A 153-amino-acid chain; its full sequence is NAD(P)H-quinone oxidoreductase subunit N (153 aa).

Belongs to the complex I NdhN subunit family. In terms of assembly, NDH-1 can be composed of about 15 different subunits; different subcomplexes with different compositions have been identified which probably have different functions.

It localises to the cellular thylakoid membrane. The catalysed reaction is a plastoquinone + NADH + (n+1) H(+)(in) = a plastoquinol + NAD(+) + n H(+)(out). The enzyme catalyses a plastoquinone + NADPH + (n+1) H(+)(in) = a plastoquinol + NADP(+) + n H(+)(out). Functionally, NDH-1 shuttles electrons from an unknown electron donor, via FMN and iron-sulfur (Fe-S) centers, to quinones in the respiratory and/or the photosynthetic chain. The immediate electron acceptor for the enzyme in this species is believed to be plastoquinone. Couples the redox reaction to proton translocation, and thus conserves the redox energy in a proton gradient. Cyanobacterial NDH-1 also plays a role in inorganic carbon-concentration. The chain is NAD(P)H-quinone oxidoreductase subunit N from Synechococcus sp. (strain CC9605).